The sequence spans 158 residues: Flagellar assembly factor FliW (158 aa).

The protein belongs to the FliW family. In terms of assembly, interacts with translational regulator CsrA and flagellin(s).

It is found in the cytoplasm. Acts as an anti-CsrA protein, binds CsrA and prevents it from repressing translation of its target genes, one of which is flagellin. Binds to flagellin and participates in the assembly of the flagellum. The sequence is that of Flagellar assembly factor FliW from Moorella thermoacetica (strain ATCC 39073 / JCM 9320).